Consider the following 421-residue polypeptide: ATP-dependent RNA helicase RhlB (421 aa).

The Q motif motif lies at 9-37; the sequence is QKFSDFALHPAVIEALEKKGFHNCTPIQA. Residues 40 to 219 form the Helicase ATP-binding domain; that stretch reads LPLTLEGRDV…FEQMNNAEYV (180 aa). Position 53 to 60 (53 to 60) interacts with ATP; that stretch reads AQTGTGKT. The DEAD box motif lies at 165 to 168; it reads DEAD. The region spanning 245 to 390 is the Helicase C-terminal domain; sequence RLLQTLLEEE…VSKYNPDALM (146 aa). Positions 396 to 421 are disordered; the sequence is PLRLTRARPGNGPRRNGPPRNRRRSG. Positions 403 to 414 are enriched in low complexity; it reads RPGNGPRRNGPP.

Belongs to the DEAD box helicase family. RhlB subfamily. Component of the RNA degradosome, which is a multiprotein complex involved in RNA processing and mRNA degradation.

It localises to the cytoplasm. It catalyses the reaction ATP + H2O = ADP + phosphate + H(+). Its function is as follows. DEAD-box RNA helicase involved in RNA degradation. Has RNA-dependent ATPase activity and unwinds double-stranded RNA. This is ATP-dependent RNA helicase RhlB from Klebsiella pneumoniae subsp. pneumoniae (strain ATCC 700721 / MGH 78578).